We begin with the raw amino-acid sequence, 232 residues long: Octanoyltransferase (232 aa).

A BPL/LPL catalytic domain is found at 44 to 219 (EHTGDELWVV…QLARQFGLVL (176 aa)). Substrate-binding positions include 83 to 90 (RGGQVTYH), 150 to 152 (ALG), and 163 to 165 (GLS). Cysteine 181 functions as the Acyl-thioester intermediate in the catalytic mechanism.

This sequence belongs to the LipB family.

The protein resides in the cytoplasm. The enzyme catalyses octanoyl-[ACP] + L-lysyl-[protein] = N(6)-octanoyl-L-lysyl-[protein] + holo-[ACP] + H(+). The protein operates within protein modification; protein lipoylation via endogenous pathway; protein N(6)-(lipoyl)lysine from octanoyl-[acyl-carrier-protein]: step 1/2. Catalyzes the transfer of endogenously produced octanoic acid from octanoyl-acyl-carrier-protein onto the lipoyl domains of lipoate-dependent enzymes. Lipoyl-ACP can also act as a substrate although octanoyl-ACP is likely to be the physiological substrate. This Xanthomonas campestris pv. campestris (strain B100) protein is Octanoyltransferase.